We begin with the raw amino-acid sequence, 476 residues long: NADH-quinone oxidoreductase subunit N (476 aa).

14 helical membrane passes run 8 to 28, 35 to 55, 71 to 91, 102 to 122, 124 to 144, 159 to 179, 201 to 221, 239 to 259, 267 to 287, 295 to 315, 322 to 342, 366 to 386, 405 to 425, and 437 to 457; these read ITTELALFILGLATFVLGLLV, GLGSFALLGLLLVLGITIINW, YATFFKILCLISAILVVLGSF, FEYYSTVIFTTLGMVVMASAG, FITLYLGLELMTISFVILVAF, ILLAGLSSAVLLYGLSLVYGA, LIVGVVMLVAGLGFKISAVPF, FLAVGSKAASFAVLLRLFAGG, WTLLVAVLAALSMLIGNLVAI, MLAYSSIAQAGYIMVGLVSAT, VMFYAFLYVFATIGAFTVVAI, ASVMLICLLSMAGIPPLAGFV, LGLIMSMVSVYYYLRVALVMF, and VGGAATITLVITMVATIILGI.

The protein belongs to the complex I subunit 2 family. As to quaternary structure, NDH-1 is composed of 14 different subunits. Subunits NuoA, H, J, K, L, M, N constitute the membrane sector of the complex.

The protein resides in the cell membrane. The catalysed reaction is a quinone + NADH + 5 H(+)(in) = a quinol + NAD(+) + 4 H(+)(out). Functionally, NDH-1 shuttles electrons from NADH, via FMN and iron-sulfur (Fe-S) centers, to quinones in the respiratory chain. The immediate electron acceptor for the enzyme in this species is believed to be a menaquinone. Couples the redox reaction to proton translocation (for every two electrons transferred, four hydrogen ions are translocated across the cytoplasmic membrane), and thus conserves the redox energy in a proton gradient. This Desulforamulus reducens (strain ATCC BAA-1160 / DSM 100696 / MI-1) (Desulfotomaculum reducens) protein is NADH-quinone oxidoreductase subunit N.